Reading from the N-terminus, the 132-residue chain is Small ribosomal subunit protein uS8 (132 aa).

Belongs to the universal ribosomal protein uS8 family. In terms of assembly, part of the 30S ribosomal subunit. Contacts proteins S5 and S12.

In terms of biological role, one of the primary rRNA binding proteins, it binds directly to 16S rRNA central domain where it helps coordinate assembly of the platform of the 30S subunit. The chain is Small ribosomal subunit protein uS8 from Limosilactobacillus reuteri (strain DSM 20016) (Lactobacillus reuteri).